The chain runs to 435 residues: uncharacterized protein (435 aa).

Residues Gln261, Tyr294, Glu318, and Asp366 each coordinate S-adenosyl-L-methionine. Cys393 (nucleophile) is an active-site residue.

The protein belongs to the class I-like SAM-binding methyltransferase superfamily. RNA M5U methyltransferase family.

This is an uncharacterized protein from Bifidobacterium longum (strain NCC 2705).